A 1133-amino-acid chain; its full sequence is Fas-binding factor 1 (1133 aa).

2 disordered regions span residues 89–198 (LGLK…TPIR) and 211–544 (IMAT…VPVQ). A compositionally biased stretch (basic and acidic residues) spans 102 to 113 (AAKDPGKGELPN). Residues 125 to 134 (KKSLPSPSSS) show a composition bias toward low complexity. Phosphoserine is present on Ser142. The span at 165 to 182 (PPVTQSKTASDKSPSTVR) shows a compositional bias: polar residues. Basic and acidic residues-rich tracts occupy residues 221 to 245 (PKAEKRQIGDQEGPRPARSTLDELL) and 259 to 276 (TGEHREFKLDKKYQRPQD). Positions 277–286 (SEDMWGDEDF) are enriched in acidic residues. Residues 295 to 310 (VVSSEGRQSRRQSVSR) show a composition bias toward low complexity. Residues 325–336 (SKQSPPMASSPI) are compositionally biased toward polar residues. Residues 415 to 424 (ASKEEKEDWL) are compositionally biased toward basic and acidic residues. The span at 459–469 (SGSQPLTSTQG) shows a compositional bias: polar residues. Over residues 473–482 (AAAGGSSGTT) the composition is skewed to low complexity. Coiled-coil stretches lie at residues 577–727 (AELQ…VDAA) and 773–870 (IRQR…EEQK). Residue Lys960 forms a Glycyl lysine isopeptide (Lys-Gly) (interchain with G-Cter in SUMO2) linkage. The segment at 1062–1085 (AASSQSALMPPAPTTRWCSQPPTG) is disordered.

In terms of assembly, may interact with FAS cytoplasmic domain. Interacts with PARD3. Interacts with TRAPPC14. As to expression, present in various epithelial cells (at protein level).

Its subcellular location is the cytoplasm. The protein resides in the cytoskeleton. It is found in the microtubule organizing center. The protein localises to the centrosome. It localises to the centriole. Its subcellular location is the spindle pole. The protein resides in the cell junction. Keratin-binding protein required for epithelial cell polarization. Involved in apical junction complex (AJC) assembly via its interaction with PARD3. Required for ciliogenesis. This is Fas-binding factor 1 (FBF1) from Homo sapiens (Human).